The chain runs to 202 residues: LexA repressor (202 aa).

Residues 28–47 (IREIGDQFGITAKGAYDHLK) constitute a DNA-binding region (H-T-H motif). Active-site for autocatalytic cleavage activity residues include S126 and K163.

Belongs to the peptidase S24 family. In terms of assembly, homodimer.

The catalysed reaction is Hydrolysis of Ala-|-Gly bond in repressor LexA.. In terms of biological role, represses a number of genes involved in the response to DNA damage (SOS response), including recA and lexA. In the presence of single-stranded DNA, RecA interacts with LexA causing an autocatalytic cleavage which disrupts the DNA-binding part of LexA, leading to derepression of the SOS regulon and eventually DNA repair. The polypeptide is LexA repressor (Leptospira biflexa serovar Patoc (strain Patoc 1 / Ames)).